Consider the following 555-residue polypeptide: Formate--tetrahydrofolate ligase (555 aa).

Residue 64-71 participates in ATP binding; sequence TPAGEGKT.

Belongs to the formate--tetrahydrofolate ligase family.

The catalysed reaction is (6S)-5,6,7,8-tetrahydrofolate + formate + ATP = (6R)-10-formyltetrahydrofolate + ADP + phosphate. It functions in the pathway one-carbon metabolism; tetrahydrofolate interconversion. This chain is Formate--tetrahydrofolate ligase, found in Allorhizobium ampelinum (strain ATCC BAA-846 / DSM 112012 / S4) (Agrobacterium vitis (strain S4)).